A 452-amino-acid chain; its full sequence is Chaperone SurA (452 aa).

Positions 1-28 (MKKTLRFAAVVSSLAASAALLVAAPAAA) are cleaved as a signal peptide. PpiC domains follow at residues 186-288 (QQDL…RLVD) and 302-400 (IVQT…QVLN).

The protein resides in the periplasm. It catalyses the reaction [protein]-peptidylproline (omega=180) = [protein]-peptidylproline (omega=0). Functionally, chaperone involved in the correct folding and assembly of outer membrane proteins. Recognizes specific patterns of aromatic residues and the orientation of their side chains, which are found more frequently in integral outer membrane proteins. May act in both early periplasmic and late outer membrane-associated steps of protein maturation. In Burkholderia orbicola (strain AU 1054), this protein is Chaperone SurA.